Reading from the N-terminus, the 91-residue chain is N.vectensis toxin 8 (91 aa).

Residues 1–26 (MNSLLKVAVVCLVMLVACFVPRVILT) form the signal peptide. Disulfide bonds link cysteine 45–cysteine 76, cysteine 47–cysteine 67, and cysteine 60–cysteine 77.

As to expression, expressed in ectodermal gland cells.

Its function is as follows. Has toxic effects on zebrafish larvae. It causes contractile paralysis and twitching of the tail within 20 minutes, followed by death within 30 minutes. Does not show any toxicity when injected into arthropods (cherry shrimps or grass shrimps). This chain is N.vectensis toxin 8, found in Nematostella vectensis (Starlet sea anemone).